Here is a 214-residue protein sequence, read N- to C-terminus: UPF0502 protein Spro_2794 (214 aa).

Belongs to the UPF0502 family.

This is UPF0502 protein Spro_2794 from Serratia proteamaculans (strain 568).